The primary structure comprises 1295 residues: DNA-directed RNA polymerase subunit beta' (1295 aa).

Residues cysteine 60, cysteine 62, cysteine 75, and cysteine 78 each contribute to the Zn(2+) site. Aspartate 516, aspartate 518, and aspartate 520 together coordinate Mg(2+). Positions 841, 914, 921, and 924 each coordinate Zn(2+).

It belongs to the RNA polymerase beta' chain family. The RNAP catalytic core consists of 2 alpha, 1 beta, 1 beta' and 1 omega subunit. When a sigma factor is associated with the core the holoenzyme is formed, which can initiate transcription. Mg(2+) is required as a cofactor. The cofactor is Zn(2+).

The catalysed reaction is RNA(n) + a ribonucleoside 5'-triphosphate = RNA(n+1) + diphosphate. DNA-dependent RNA polymerase catalyzes the transcription of DNA into RNA using the four ribonucleoside triphosphates as substrates. This Dehalococcoides mccartyi (strain ATCC BAA-2100 / JCM 16839 / KCTC 5957 / BAV1) protein is DNA-directed RNA polymerase subunit beta'.